Reading from the N-terminus, the 453-residue chain is Bifunctional protein GlmU (453 aa).

The pyrophosphorylase stretch occupies residues 1–228 (MPHWAAVIMA…VHEALGINSR (228 aa)). Residues Lys23, Gln73, 78-79 (GT), 100-102 (SGD), Gly139, Glu153, Asn168, and Asn226 each bind UDP-N-acetyl-alpha-D-glucosamine. Asp102 is a binding site for Mg(2+). Asn226 lines the Mg(2+) pocket. The segment at 229–249 (AQLAAAEDVARQRILSYWMEE) is linker. The N-acetyltransferase stretch occupies residues 250-453 (GVTIIDPRST…IENWVRNKKK (204 aa)). UDP-N-acetyl-alpha-D-glucosamine contacts are provided by Arg331 and Lys349. His361 acts as the Proton acceptor in catalysis. Residues Tyr364 and Asn375 each coordinate UDP-N-acetyl-alpha-D-glucosamine. Acetyl-CoA-binding positions include Ala378, 384–385 (NY), Ser403, Ala421, and Arg438.

In the N-terminal section; belongs to the N-acetylglucosamine-1-phosphate uridyltransferase family. The protein in the C-terminal section; belongs to the transferase hexapeptide repeat family. As to quaternary structure, homotrimer. Requires Mg(2+) as cofactor.

The protein resides in the cytoplasm. The catalysed reaction is alpha-D-glucosamine 1-phosphate + acetyl-CoA = N-acetyl-alpha-D-glucosamine 1-phosphate + CoA + H(+). It carries out the reaction N-acetyl-alpha-D-glucosamine 1-phosphate + UTP + H(+) = UDP-N-acetyl-alpha-D-glucosamine + diphosphate. It functions in the pathway nucleotide-sugar biosynthesis; UDP-N-acetyl-alpha-D-glucosamine biosynthesis; N-acetyl-alpha-D-glucosamine 1-phosphate from alpha-D-glucosamine 6-phosphate (route II): step 2/2. The protein operates within nucleotide-sugar biosynthesis; UDP-N-acetyl-alpha-D-glucosamine biosynthesis; UDP-N-acetyl-alpha-D-glucosamine from N-acetyl-alpha-D-glucosamine 1-phosphate: step 1/1. It participates in bacterial outer membrane biogenesis; LPS lipid A biosynthesis. Catalyzes the last two sequential reactions in the de novo biosynthetic pathway for UDP-N-acetylglucosamine (UDP-GlcNAc). The C-terminal domain catalyzes the transfer of acetyl group from acetyl coenzyme A to glucosamine-1-phosphate (GlcN-1-P) to produce N-acetylglucosamine-1-phosphate (GlcNAc-1-P), which is converted into UDP-GlcNAc by the transfer of uridine 5-monophosphate (from uridine 5-triphosphate), a reaction catalyzed by the N-terminal domain. The sequence is that of Bifunctional protein GlmU from Desulfitobacterium hafniense (strain Y51).